The chain runs to 701 residues: Polyribonucleotide nucleotidyltransferase (701 aa).

Mg(2+) contacts are provided by aspartate 480 and aspartate 486. One can recognise a KH domain in the interval 547 to 606; it reads PKIDTIKIDVDKIKVVIGKGGETIDKIIAETGVKIDIDDEGNVSIYSSDQAAINRTKEII. One can recognise an S1 motif domain in the interval 616–684; the sequence is GEVYHAKVVR…EKGRVDASMK (69 aa). Positions 682–701 are disordered; that stretch reads SMKALIPRPPKPEKKEEKHD. Over residues 691–701 the composition is skewed to basic and acidic residues; that stretch reads PKPEKKEEKHD.

This sequence belongs to the polyribonucleotide nucleotidyltransferase family. It depends on Mg(2+) as a cofactor.

It is found in the cytoplasm. It catalyses the reaction RNA(n+1) + phosphate = RNA(n) + a ribonucleoside 5'-diphosphate. Its function is as follows. Involved in mRNA degradation. Catalyzes the phosphorolysis of single-stranded polyribonucleotides processively in the 3'- to 5'-direction. The sequence is that of Polyribonucleotide nucleotidyltransferase from Streptococcus pyogenes serotype M12 (strain MGAS2096).